The following is a 437-amino-acid chain: tRNA(Ile2) 2-agmatinylcytidine synthetase TiaS (437 aa).

It belongs to the TiaS family.

The protein resides in the cytoplasm. The catalysed reaction is cytidine(34) in tRNA(Ile2) + agmatine + ATP + H2O = 2-agmatinylcytidine(34) in tRNA(Ile2) + AMP + 2 phosphate + 2 H(+). Functionally, ATP-dependent agmatine transferase that catalyzes the formation of 2-agmatinylcytidine (agm2C) at the wobble position (C34) of tRNA(Ile2), converting the codon specificity from AUG to AUA. In Acidilobus saccharovorans (strain DSM 16705 / JCM 18335 / VKM B-2471 / 345-15), this protein is tRNA(Ile2) 2-agmatinylcytidine synthetase TiaS.